The chain runs to 494 residues: Ketol-acid reductoisomerase (NADP(+)) (494 aa).

Residues 14–208 enclose the KARI N-terminal Rossmann domain; it reads LDQLGRCRFM…GGHRAGCLES (195 aa). Residues 45–48, arginine 68, arginine 76, serine 78, and 108–110 contribute to the NADP(+) site; these read CGAQ and DKQ. Histidine 132 is a catalytic residue. Glycine 158 contacts NADP(+). KARI C-terminal knotted domains lie at 209-344 and 345-487; these read SFVA…NYPE and TDVE…MTDM. 4 residues coordinate Mg(2+): aspartate 217, glutamate 221, glutamate 389, and glutamate 393. Substrate is bound at residue serine 414.

The protein belongs to the ketol-acid reductoisomerase family. It depends on Mg(2+) as a cofactor.

The enzyme catalyses (2R)-2,3-dihydroxy-3-methylbutanoate + NADP(+) = (2S)-2-acetolactate + NADPH + H(+). It catalyses the reaction (2R,3R)-2,3-dihydroxy-3-methylpentanoate + NADP(+) = (S)-2-ethyl-2-hydroxy-3-oxobutanoate + NADPH + H(+). Its pathway is amino-acid biosynthesis; L-isoleucine biosynthesis; L-isoleucine from 2-oxobutanoate: step 2/4. It participates in amino-acid biosynthesis; L-valine biosynthesis; L-valine from pyruvate: step 2/4. Its function is as follows. Involved in the biosynthesis of branched-chain amino acids (BCAA). Catalyzes an alkyl-migration followed by a ketol-acid reduction of (S)-2-acetolactate (S2AL) to yield (R)-2,3-dihydroxy-isovalerate. In the isomerase reaction, S2AL is rearranged via a Mg-dependent methyl migration to produce 3-hydroxy-3-methyl-2-ketobutyrate (HMKB). In the reductase reaction, this 2-ketoacid undergoes a metal-dependent reduction by NADPH to yield (R)-2,3-dihydroxy-isovalerate. This is Ketol-acid reductoisomerase (NADP(+)) from Vibrio parahaemolyticus serotype O3:K6 (strain RIMD 2210633).